The following is a 553-amino-acid chain: MSTARLQQQFIRLWQRFSGLPTETTLQELAEVLCCSRRHVRSLLGSMQQEGWLSWQAEAGRGKRSQLTFLYSGLALQQQRAEELLEQEGIDQLVQLVGDKKAVRQMLLSQLGRSFRQGKHILRVLYYRPLQNLLPGTALRRSETHMVRQIFNGLTRINEENGELEPDLSHHWQAISPLHWRFYLRPAIHFHHGRELEMNDVITSLTRLIPQPLFSHITAVRSPTPYVIDVHLSAPDNWLPWLLGSVHAMILPQEWENQPDFRRHPIGTGPYSVIRNHQSQLKIQAFDNYFGFRALIDEVNIWVLPELSEELVYSGVQLQADDTSKNELESRLEEGCYFLLFDQRSPLTRNPDIRRWLCELITPVALLSHADPFYQRYWSPAYGMLPRWHHNRLRVLETKPEGLTELTLTFYSHHSEFDAISQTLTKLLADQGVNLKIHVVDYTQWYQGDAQSDMWLGSANFYLPLEFSLFATLYELPLLQYCLDEELHQDVELWRNNTLQMADWSQRLVSQNQFHPLFHHWLELYGQHSMRGVRMNTLGWFDFKSAWFTPPET.

The HTH marR-type domain occupies 1–117; the sequence is MSTARLQQQF…LSQLGRSFRQ (117 aa). The H-T-H motif DNA-binding region spans 26 to 49; sequence LQELAEVLCCSRRHVRSLLGSMQQ. The tract at residues 163 to 494 is solute-binding; the sequence is ELEPDLSHHW…EELHQDVELW (332 aa).

Its function is as follows. Activates the small RNA gene sgrS under glucose-phosphate stress conditions as well as yfdZ. Represses its own transcription under both stress and non-stress conditions. Might act as a sensor of the intracellular accumulation of phosphoglucose by binding these molecules in its C-terminal solute-binding domain. This Yersinia enterocolitica serotype O:8 / biotype 1B (strain NCTC 13174 / 8081) protein is HTH-type transcriptional regulator SgrR.